The following is a 74-amino-acid chain: Small ribosomal subunit protein eS28 (74 aa).

Belongs to the eukaryotic ribosomal protein eS28 family.

In Halobacterium salinarum (strain ATCC 29341 / DSM 671 / R1), this protein is Small ribosomal subunit protein eS28.